The primary structure comprises 155 residues: Ribosomal RNA large subunit methyltransferase H (155 aa).

S-adenosyl-L-methionine-binding positions include Leu-73, Gly-104, and 123–128; that span reads LSPLTL.

Belongs to the RNA methyltransferase RlmH family. In terms of assembly, homodimer.

The protein resides in the cytoplasm. The enzyme catalyses pseudouridine(1915) in 23S rRNA + S-adenosyl-L-methionine = N(3)-methylpseudouridine(1915) in 23S rRNA + S-adenosyl-L-homocysteine + H(+). Functionally, specifically methylates the pseudouridine at position 1915 (m3Psi1915) in 23S rRNA. In Ectopseudomonas mendocina (strain ymp) (Pseudomonas mendocina), this protein is Ribosomal RNA large subunit methyltransferase H.